The chain runs to 209 residues: Zinc finger SWIM domain-containing protein sws1 (209 aa).

Residues 1-30 (MQQGHFTSNSYHSKTLNSSSLPVSSKFSHT) are compositionally biased toward polar residues. The tract at residues 1 to 33 (MQQGHFTSNSYHSKTLNSSSLPVSSKFSHTNDP) is disordered. The SWIM-type zinc-finger motif lies at 143-203 (TTIDLKYWYC…HILAASILRA (61 aa)).

In terms of assembly, interacts with rdl1, rlp1 and srs2.

Its subcellular location is the cytoplasm. The protein localises to the nucleus. It is found in the nucleoplasm. In terms of biological role, involved in early stages of the homologous recombination repair (HRR) pathway of double-stranded DNA breaks arising during DNA replication or induced by DNA-damaging agents. The protein is Zinc finger SWIM domain-containing protein sws1 (sws1) of Schizosaccharomyces pombe (strain 972 / ATCC 24843) (Fission yeast).